The sequence spans 491 residues: Cyclin-A1-3 (491 aa).

Low complexity predominate over residues 1–21; it reads MSSSLASRRSSSSSAAKRPAA. Disordered regions lie at residues 1–32 and 69–106; these read MSSS…AAGA and SLAS…QKES. Polar residues predominate over residues 75–91; sequence NVGTNRVSAVKSASTKP.

The protein belongs to the cyclin family. Cyclin AB subfamily.

This chain is Cyclin-A1-3 (CYCA1-3), found in Oryza sativa subsp. japonica (Rice).